The primary structure comprises 371 residues: Dihydroorotate dehydrogenase (quinone) (371 aa).

FMN contacts are provided by residues alanine 79–lysine 83 and threonine 103. Lysine 83 serves as a coordination point for substrate. Position 128–132 (asparagine 128–phenylalanine 132) interacts with substrate. Asparagine 156 and asparagine 189 together coordinate FMN. Asparagine 189 serves as a coordination point for substrate. Serine 192 acts as the Nucleophile in catalysis. Asparagine 194 provides a ligand contact to substrate. Residues lysine 225 and threonine 253 each contribute to the FMN site. Residue asparagine 254–threonine 255 participates in substrate binding. FMN-binding positions include glycine 279, glycine 308, and tyrosine 329 to threonine 330.

This sequence belongs to the dihydroorotate dehydrogenase family. Type 2 subfamily. In terms of assembly, monomer. Requires FMN as cofactor.

It is found in the cell membrane. The enzyme catalyses (S)-dihydroorotate + a quinone = orotate + a quinol. The protein operates within pyrimidine metabolism; UMP biosynthesis via de novo pathway; orotate from (S)-dihydroorotate (quinone route): step 1/1. Its function is as follows. Catalyzes the conversion of dihydroorotate to orotate with quinone as electron acceptor. This is Dihydroorotate dehydrogenase (quinone) from Corynebacterium glutamicum (strain R).